Consider the following 589-residue polypeptide: Arginine--tRNA ligase (589 aa).

The short motif at 123-133 (ANVAKPMHVGH) is the 'HIGH' region element.

It belongs to the class-I aminoacyl-tRNA synthetase family. As to quaternary structure, monomer.

Its subcellular location is the cytoplasm. It catalyses the reaction tRNA(Arg) + L-arginine + ATP = L-arginyl-tRNA(Arg) + AMP + diphosphate. The protein is Arginine--tRNA ligase of Hyphomonas neptunium (strain ATCC 15444).